Consider the following 382-residue polypeptide: S-adenosylmethionine synthase (382 aa).

His-16 serves as a coordination point for ATP. Residue Asp-18 participates in Mg(2+) binding. Residue Glu-44 coordinates K(+). 2 residues coordinate L-methionine: Glu-57 and Gln-100. The tract at residues 100–110 (QSADIAMGVDE) is flexible loop. ATP-binding positions include 165–167 (DAK), Asp-240, 246–247 (RK), Ala-263, and Lys-267. Asp-240 is an L-methionine binding site. Lys-271 is an L-methionine binding site.

Belongs to the AdoMet synthase family. In terms of assembly, homotetramer; dimer of dimers. It depends on Mg(2+) as a cofactor. K(+) is required as a cofactor.

The protein localises to the cytoplasm. It catalyses the reaction L-methionine + ATP + H2O = S-adenosyl-L-methionine + phosphate + diphosphate. Its pathway is amino-acid biosynthesis; S-adenosyl-L-methionine biosynthesis; S-adenosyl-L-methionine from L-methionine: step 1/1. Its function is as follows. Catalyzes the formation of S-adenosylmethionine (AdoMet) from methionine and ATP. The overall synthetic reaction is composed of two sequential steps, AdoMet formation and the subsequent tripolyphosphate hydrolysis which occurs prior to release of AdoMet from the enzyme. In Saccharophagus degradans (strain 2-40 / ATCC 43961 / DSM 17024), this protein is S-adenosylmethionine synthase.